Here is an 873-residue protein sequence, read N- to C-terminus: Coatomer subunit gamma-2 (873 aa).

Basic and acidic residues predominate over residues 1–11 (MIKKFDKKDEE). Positions 1-21 (MIKKFDKKDEESGSGSNPFQH) are disordered. HEAT repeat units lie at residues 64–101 (TEAT…ISED), 283–320 (RELA…KHPS), 321–355 (AVTA…GSES), 356–392 (SVDR…KYPR), 395–430 (SVMM…ENPE), and 467–504 (PTPS…QNDD).

Belongs to the COPG family. As to quaternary structure, oligomeric complex.

It localises to the cytoplasm. Its subcellular location is the golgi apparatus membrane. The protein localises to the cytoplasmic vesicle. It is found in the COPI-coated vesicle membrane. The coatomer is a cytosolic protein complex that binds to dilysine motifs and reversibly associates with Golgi non-clathrin-coated vesicles, which further mediate biosynthetic protein transport from the ER, via the Golgi up to the trans Golgi network. Coatomer complex is required for budding from Golgi membranes, and is essential for the retrograde Golgi-to-ER transport of dilysine-tagged proteins. This is Coatomer subunit gamma-2 (copg2) from Danio rerio (Zebrafish).